A 761-amino-acid chain; its full sequence is 5-methyltetrahydropteroyltriglutamate--homocysteine methyltransferase (761 aa).

Residues 16–19 (RELK) and K116 contribute to the 5-methyltetrahydropteroyltri-L-glutamate site. L-homocysteine is bound by residues 437–439 (IGS) and E490. L-methionine contacts are provided by residues 437 to 439 (IGS) and E490. 5-methyltetrahydropteroyltri-L-glutamate is bound by residues 521 to 522 (RC) and W567. Residue D605 participates in L-homocysteine binding. L-methionine is bound at residue D605. E611 is a 5-methyltetrahydropteroyltri-L-glutamate binding site. Residues H647, C649, and E671 each coordinate Zn(2+). Residue H700 is the Proton donor of the active site. A Zn(2+)-binding site is contributed by C732.

This sequence belongs to the vitamin-B12 independent methionine synthase family. It depends on Zn(2+) as a cofactor.

The catalysed reaction is 5-methyltetrahydropteroyltri-L-glutamate + L-homocysteine = tetrahydropteroyltri-L-glutamate + L-methionine. Its pathway is amino-acid biosynthesis; L-methionine biosynthesis via de novo pathway; L-methionine from L-homocysteine (MetE route): step 1/1. Catalyzes the transfer of a methyl group from 5-methyltetrahydrofolate to homocysteine resulting in methionine formation. This is 5-methyltetrahydropteroyltriglutamate--homocysteine methyltransferase from Chromohalobacter salexigens (strain ATCC BAA-138 / DSM 3043 / CIP 106854 / NCIMB 13768 / 1H11).